The sequence spans 434 residues: Beta-enolase (434 aa).

Ala-2 is modified (N-acetylalanine). Residue Thr-72 is modified to Phosphothreonine. Ser-83 and Ser-157 each carry phosphoserine. Residues His-158 and Glu-167 each contribute to the substrate site. Residue Ser-176 is modified to Phosphoserine. A Phosphothreonine modification is found at Thr-205. Residue Glu-210 is the Proton donor of the active site. The residue at position 229 (Thr-229) is a Phosphothreonine. Tyr-236 carries the phosphotyrosine modification. Asp-245 provides a ligand contact to Mg(2+). Ser-263 is subject to Phosphoserine. Positions 293 and 318 each coordinate substrate. 2 residues coordinate Mg(2+): Glu-293 and Asp-318. Residue Lys-343 is the Proton acceptor of the active site. Residues 370–373 (SHRS) and Lys-394 contribute to the substrate site.

It belongs to the enolase family. In terms of assembly, mammalian enolase is composed of 3 isozyme subunits, alpha, beta and gamma, which can form homodimers or heterodimers which are cell-type and development-specific. Interacts with PNKD. Mg(2+) is required as a cofactor. The alpha/alpha homodimer is expressed in embryo and in most adult tissues. The alpha/beta heterodimer and the beta/beta homodimer are found in striated muscle, and the alpha/gamma heterodimer and the gamma/gamma homodimer in neurons.

The protein resides in the cytoplasm. It carries out the reaction (2R)-2-phosphoglycerate = phosphoenolpyruvate + H2O. It participates in carbohydrate degradation; glycolysis; pyruvate from D-glyceraldehyde 3-phosphate: step 4/5. Its function is as follows. Glycolytic enzyme that catalyzes the conversion of 2-phosphoglycerate to phosphoenolpyruvate. Appears to have a function in striated muscle development and regeneration. The polypeptide is Beta-enolase (ENO3) (Oryctolagus cuniculus (Rabbit)).